Reading from the N-terminus, the 103-residue chain is Large ribosomal subunit protein bL21 (103 aa).

This sequence belongs to the bacterial ribosomal protein bL21 family. In terms of assembly, part of the 50S ribosomal subunit. Contacts protein L20.

In terms of biological role, this protein binds to 23S rRNA in the presence of protein L20. This chain is Large ribosomal subunit protein bL21, found in Shewanella baltica (strain OS223).